The following is a 203-amino-acid chain: Non-histone protein 10 (203 aa).

Ser-2 is subject to N-acetylserine. Disordered regions lie at residues 78–97 (KSKT…PKRP) and 161–203 (ISNI…VSSN). The segment at residues 94–158 (PKRPTNAYLL…RYQMEMEIYN (65 aa)) is a DNA-binding region (HMG box).

Component of the chromatin-remodeling INO80 complex, at least composed of ARP4, ARP5, ARP8, RVB1, RVB2, TAF14, NHP10, IES1, IES3, IES4, IES6, ACT1, IES2, IES5 and INO80.

Its subcellular location is the nucleus. Functionally, probably involved in transcription regulation via its interaction with the INO80 complex, a chromatin remodeling complex. This chain is Non-histone protein 10 (NHP10), found in Saccharomyces cerevisiae (strain ATCC 204508 / S288c) (Baker's yeast).